A 134-amino-acid polypeptide reads, in one-letter code: DNA-directed RNA polymerase subunit omega (134 aa).

Residues 76–102 (EVDEPEPDPASMIAAGGAAAADSEEQD) form a disordered region.

It belongs to the RNA polymerase subunit omega family. As to quaternary structure, the RNAP catalytic core consists of 2 alpha, 1 beta, 1 beta' and 1 omega subunit. When a sigma factor is associated with the core the holoenzyme is formed, which can initiate transcription.

The catalysed reaction is RNA(n) + a ribonucleoside 5'-triphosphate = RNA(n+1) + diphosphate. Functionally, promotes RNA polymerase assembly. Latches the N- and C-terminal regions of the beta' subunit thereby facilitating its interaction with the beta and alpha subunits. The chain is DNA-directed RNA polymerase subunit omega from Rhizobium etli (strain ATCC 51251 / DSM 11541 / JCM 21823 / NBRC 15573 / CFN 42).